The following is a 271-amino-acid chain: Aminoglycoside 3'-phosphotransferase (271 aa).

The Proton acceptor role is filled by Asp-198.

Belongs to the aminoglycoside phosphotransferase family.

The catalysed reaction is kanamycin A + ATP = kanamycin 3'-phosphate + ADP + H(+). Functionally, resistance to kanamycin and structurally-related aminoglycosides, including amikacin. The chain is Aminoglycoside 3'-phosphotransferase (aphA) from Escherichia coli.